The following is a 93-amino-acid chain: Peptidyl-prolyl cis-trans isomerase C (93 aa).

In terms of domain architecture, PpiC spans 2 to 91; it reads AKTAAALHIL…FGYHIIKVLY (90 aa).

It belongs to the PpiC/parvulin rotamase family.

The protein resides in the cytoplasm. It catalyses the reaction [protein]-peptidylproline (omega=180) = [protein]-peptidylproline (omega=0). With respect to regulation, not inhibited by cyclosporin A or FK506. PPIases accelerate the folding of proteins. It prefers amino acid residues with hydrophobic side chains like leucine and phenylalanine in the P1 position of the peptides substrates. The sequence is that of Peptidyl-prolyl cis-trans isomerase C (ppiC) from Escherichia coli (strain K12).